A 65-amino-acid polypeptide reads, in one-letter code: Large ribosomal subunit protein uL29 (65 aa).

This sequence belongs to the universal ribosomal protein uL29 family.

This chain is Large ribosomal subunit protein uL29, found in Lactobacillus johnsonii (strain CNCM I-12250 / La1 / NCC 533).